Here is a 78-residue protein sequence, read N- to C-terminus: Large ribosomal subunit protein bL28 (78 aa).

Positions 1–21 are disordered; that stretch reads MSRVCQVTGKRPVSGNNRSHA.

This sequence belongs to the bacterial ribosomal protein bL28 family.

The sequence is that of Large ribosomal subunit protein bL28 from Sodalis glossinidius (strain morsitans).